The chain runs to 449 residues: CCAAT/enhancer-binding protein (449 aa).

3 disordered regions span residues His-211–Glu-233, Gly-276–Gln-302, and Ser-334–Val-386. Low complexity-rich tracts occupy residues Asn-215–Ser-229, Asn-280–Ser-301, and Gln-339–Gln-349. Over residues Lys-357 to Arg-368 the composition is skewed to basic and acidic residues. Positions Thr-363–Leu-426 constitute a bZIP domain. The tract at residues Arg-367–Lys-396 is basic motif. Residues Leu-398–Leu-405 form a leucine-zipper region.

Belongs to the bZIP family. C/EBP subfamily. As to quaternary structure, binds DNA as a dimer and can form stable heterodimers. Interacts with trbl. Post-translationally, ubiquitination/deubiquitination regulates border cell migration. Ubiquitination is stimulated by trbl, which leads to proteasomal degradation and inhibits border cell migration. Deubiquitination by Usp47, leads to its stabilization and promotes border cell migration.

Its subcellular location is the nucleus. Required for the expression of gene products mediating border cell migration. Among the DNA sequences that this protein binds with high affinity is a conserved site within the promoter of its gene. This chain is CCAAT/enhancer-binding protein (slbo), found in Drosophila melanogaster (Fruit fly).